Consider the following 312-residue polypeptide: Peroxidase (312 aa).

The signal sequence occupies residues 1-23 (MAMGSASCISLVVLVALATAASG). A Pyrrolidone carboxylic acid modification is found at Gln24. Disulfide bonds link Cys34/Cys107, Cys67/Cys70, Cys113/Cys307, and Cys192/Cys218. His65 serves as the catalytic Proton acceptor. Asp66, Gly69, Asp71, and Ser73 together coordinate Ca(2+). Substrate is bound at residue Pro155. His185 lines the heme b pocket. Thr186 is a Ca(2+) binding site. 3 residues coordinate Ca(2+): Asp231, Thr234, and Asp239. A glycan (N-linked (GlcNAc...) asparagine) is linked at Asn262.

Belongs to the peroxidase family. Classical plant (class III) peroxidase subfamily. The cofactor is Ca(2+). Heme b serves as cofactor. As to expression, root.

It localises to the secreted. The catalysed reaction is 2 a phenolic donor + H2O2 = 2 a phenolic radical donor + 2 H2O. Its function is as follows. Removal of H(2)O(2), oxidation of toxic reductants, biosynthesis and degradation of lignin, suberization, auxin catabolism, response to environmental stresses such as wounding, pathogen attack and oxidative stress. These functions might be dependent on each isozyme/isoform in each plant tissue. Involved in defense response to powdery meldew fungus. This is Peroxidase from Triticum aestivum (Wheat).